A 245-amino-acid polypeptide reads, in one-letter code: Enolase-phosphatase E1 (245 aa).

The protein belongs to the HAD-like hydrolase superfamily. MasA/MtnC family. As to quaternary structure, monomer. Mg(2+) serves as cofactor.

It carries out the reaction 5-methylsulfanyl-2,3-dioxopentyl phosphate + H2O = 1,2-dihydroxy-5-(methylsulfanyl)pent-1-en-3-one + phosphate. Its pathway is amino-acid biosynthesis; L-methionine biosynthesis via salvage pathway; L-methionine from S-methyl-5-thio-alpha-D-ribose 1-phosphate: step 3/6. The protein operates within amino-acid biosynthesis; L-methionine biosynthesis via salvage pathway; L-methionine from S-methyl-5-thio-alpha-D-ribose 1-phosphate: step 4/6. Functionally, bifunctional enzyme that catalyzes the enolization of 2,3-diketo-5-methylthiopentyl-1-phosphate (DK-MTP-1-P) into the intermediate 2-hydroxy-3-keto-5-methylthiopentenyl-1-phosphate (HK-MTPenyl-1-P), which is then dephosphorylated to form the acireductone 1,2-dihydroxy-3-keto-5-methylthiopentene (DHK-MTPene). This Prochlorococcus marinus (strain MIT 9313) protein is Enolase-phosphatase E1.